Consider the following 86-residue polypeptide: Putative membrane protein insertion efficiency factor (86 aa).

The tract at residues 64–86 is disordered; that stretch reads GVDPVPKKSSSKTSTTACGCGHS. Residues 70–79 show a composition bias toward low complexity; sequence KKSSSKTSTT.

This sequence belongs to the UPF0161 family.

The protein resides in the cell inner membrane. Its function is as follows. Could be involved in insertion of integral membrane proteins into the membrane. The chain is Putative membrane protein insertion efficiency factor from Janthinobacterium sp. (strain Marseille) (Minibacterium massiliensis).